Consider the following 156-residue polypeptide: Small ribosomal subunit protein uS7 (156 aa).

It belongs to the universal ribosomal protein uS7 family. In terms of assembly, part of the 30S ribosomal subunit. Contacts proteins S9 and S11.

Its function is as follows. One of the primary rRNA binding proteins, it binds directly to 16S rRNA where it nucleates assembly of the head domain of the 30S subunit. Is located at the subunit interface close to the decoding center, probably blocks exit of the E-site tRNA. The protein is Small ribosomal subunit protein uS7 of Bacillus cytotoxicus (strain DSM 22905 / CIP 110041 / 391-98 / NVH 391-98).